Consider the following 191-residue polypeptide: CASP-like protein 4C3 (191 aa).

The Cytoplasmic portion of the chain corresponds to 1-29 (METGDSAVKSSQDVHYYGKSTAQKHRRSN). The helical transmembrane segment at 30–50 (GIILIFRALTFSFSLTSVIVM) threads the bilayer. At 51–72 (GTNRHRIDAQSRVAWYDFDPFR) the chain is on the extracellular side. A helical membrane pass occupies residues 73 to 93 (YVLAVNAIICIYSFVEIWLAV). Topologically, residues 94 to 116 (YTYLKDTLFLPETFQVWFDYGHD) are cytoplasmic. The chain crosses the membrane as a helical span at residues 117–137 (QGFAYLLFSANSAGIAMAQLL). The Extracellular portion of the chain corresponds to 138 to 162 (QSGNSLIHGAYRCSDAGVFCTQARA). A helical transmembrane segment spans residues 163-183 (SIGLGFGAFLFLALSSLLTGL). Over 184 to 191 (RVARWYFS) the chain is Cytoplasmic.

This sequence belongs to the Casparian strip membrane proteins (CASP) family. Homodimer and heterodimers.

It is found in the cell membrane. The protein is CASP-like protein 4C3 of Physcomitrium patens (Spreading-leaved earth moss).